Consider the following 180-residue polypeptide: Adenine phosphoribosyltransferase (180 aa).

The protein belongs to the purine/pyrimidine phosphoribosyltransferase family. As to quaternary structure, homodimer.

It is found in the cytoplasm. It carries out the reaction AMP + diphosphate = 5-phospho-alpha-D-ribose 1-diphosphate + adenine. It functions in the pathway purine metabolism; AMP biosynthesis via salvage pathway; AMP from adenine: step 1/1. In terms of biological role, catalyzes a salvage reaction resulting in the formation of AMP, that is energically less costly than de novo synthesis. This chain is Adenine phosphoribosyltransferase, found in Mycobacterium avium (strain 104).